We begin with the raw amino-acid sequence, 252 residues long: 5-oxoprolinase subunit A (252 aa).

Belongs to the LamB/PxpA family. In terms of assembly, forms a complex composed of PxpA, PxpB and PxpC.

It catalyses the reaction 5-oxo-L-proline + ATP + 2 H2O = L-glutamate + ADP + phosphate + H(+). Functionally, catalyzes the cleavage of 5-oxoproline to form L-glutamate coupled to the hydrolysis of ATP to ADP and inorganic phosphate. In Bordetella pertussis (strain Tohama I / ATCC BAA-589 / NCTC 13251), this protein is 5-oxoprolinase subunit A.